The primary structure comprises 115 residues: Cytochrome c (115 aa).

Positions 26, 29, 30, and 91 each coordinate heme c.

This sequence belongs to the cytochrome c family. In terms of processing, binds 1 heme c group covalently per subunit.

Its subcellular location is the mitochondrion intermembrane space. In terms of biological role, electron carrier protein. The oxidized form of the cytochrome c heme group can accept an electron from the heme group of the cytochrome c1 subunit of cytochrome reductase. Cytochrome c then transfers this electron to the cytochrome oxidase complex, the final protein carrier in the mitochondrial electron-transport chain. This is Cytochrome c from Theileria parva (East coast fever infection agent).